A 202-amino-acid polypeptide reads, in one-letter code: Histone chaperone ASF1B (202 aa).

Positions 1–155 are interaction with CHAF1B; sequence MAKVSVLNVA…VTRFHINWDN (155 aa). Residues 1 to 156 are interaction with histone H3; the sequence is MAKVSVLNVA…TRFHINWDNN (156 aa). Ser-198 carries the post-translational modification Phosphoserine; by TLK2.

The protein belongs to the ASF1 family. Interacts with histone H3 (via C-terminus), including histone H3.1, H3.2 and H3.3, and histone H4; the interaction with H3 is direct. Interacts with the CHAF1A, CHAF1B and RBBP4 subunits of the CAF-1 complex. Interacts with HAT1, NASP and TAF1. Found in a soluble complex with NASP and histones H3 and H4; the interaction with NASP is probably indirect and mediated by H3-H4. Interacts with CDAN1. Found in a cytosolic complex with IPO4 and histones H3 and H4. Interacts with CREBBP. In terms of processing, phosphorylated by TLK1 and TLK2. Highly expressed in testis and at lower levels in colon, small intestine and thymus.

The protein localises to the nucleus. The protein resides in the cytoplasm. Its subcellular location is the cytosol. Its function is as follows. Histone chaperone that facilitates histone deposition and histone exchange and removal during nucleosome assembly and disassembly. Cooperates with chromatin assembly factor 1 (CAF-1) to promote replication-dependent chromatin assembly. Also involved in the nuclear import of the histone H3-H4 dimer together with importin-4 (IPO4): specifically recognizes and binds newly synthesized histones with the monomethylation of H3 'Lys-9' (H3K9me1) and diacetylation at 'Lys-5' and 'Lys-12' of H4 (H4K5K12ac) marks in the cytosol. Does not participate in replication-independent nucleosome deposition which is mediated by ASF1A and HIRA. Required for gonad development. The polypeptide is Histone chaperone ASF1B (Homo sapiens (Human)).